We begin with the raw amino-acid sequence, 254 residues long: Ferritin, chloroplastic (254 aa).

Residues 1–48 (MALAPSKVSPFSGFSLSDGVGAVRNPTCSVSLSFLNKKVGSRNLGVSA) constitute a chloroplast transit peptide. An extension peptide (EP) region spans residues 49–81 (STVPLTGVIFEPFEEVKKEELAVPTAGQVSLAR). A Ferritin-like diiron domain is found at 82 to 235 (QYYADECESA…EYVAQLRMVG (154 aa)). 5 residues coordinate Fe cation: glutamate 99, glutamate 134, histidine 137, glutamate 183, and glutamine 217.

The protein belongs to the ferritin family. Oligomer of 24 subunits. There are two types of subunits: L (light) chain and H (heavy) chain. The major chain can be light or heavy, depending on the species and tissue type. The functional molecule forms a roughly spherical shell with a diameter of 12 nm and contains a central cavity into which the insoluble mineral iron core is deposited.

The protein resides in the plastid. The protein localises to the chloroplast. The catalysed reaction is 4 Fe(2+) + O2 + 4 H(+) = 4 Fe(3+) + 2 H2O. Stores iron in a soluble, non-toxic, readily available form. Important for iron homeostasis. Has ferroxidase activity. Iron is taken up in the ferrous form and deposited as ferric hydroxides after oxidation. The sequence is that of Ferritin, chloroplastic (PFE) from Phaseolus vulgaris (Kidney bean).